The primary structure comprises 140 residues: Smith-Magenis syndrome chromosomal region candidate gene 5 protein (140 aa).

The tract at residues 43 to 77 (CTGPSSQAPPQPPQASPPAAADHSRTPSLLASSHS) is disordered. A compositionally biased stretch (pro residues) spans 49–58 (QAPPQPPQAS).

As to expression, widely expressed.

The chain is Smith-Magenis syndrome chromosomal region candidate gene 5 protein (SMCR5) from Homo sapiens (Human).